The chain runs to 153 residues: MAIITGNLVATELKFGIVCARFNDFINDKLLSGAIDTLVRHGASESDIDTAWVPGAFEIPLVAKKMAESGKYDAVICLGTVIRGSTTHYDYVCNEAAKGIGAVSLQTGVPVIFGVLTTENIEQAIERAGTKAGNKGSECALGAIEMVNVLKGL.

5-amino-6-(D-ribitylamino)uracil is bound by residues F22, 56-58, and 80-82; these read AFE and TVI. 85–86 lines the (2S)-2-hydroxy-3-oxobutyl phosphate pocket; it reads ST. H88 functions as the Proton donor in the catalytic mechanism. Residue F113 participates in 5-amino-6-(D-ribitylamino)uracil binding. R127 serves as a coordination point for (2S)-2-hydroxy-3-oxobutyl phosphate.

This sequence belongs to the DMRL synthase family. As to quaternary structure, forms an icosahedral capsid composed of 60 subunits, arranged as a dodecamer of pentamers.

The catalysed reaction is (2S)-2-hydroxy-3-oxobutyl phosphate + 5-amino-6-(D-ribitylamino)uracil = 6,7-dimethyl-8-(1-D-ribityl)lumazine + phosphate + 2 H2O + H(+). It functions in the pathway cofactor biosynthesis; riboflavin biosynthesis; riboflavin from 2-hydroxy-3-oxobutyl phosphate and 5-amino-6-(D-ribitylamino)uracil: step 1/2. In terms of biological role, catalyzes the formation of 6,7-dimethyl-8-ribityllumazine by condensation of 5-amino-6-(D-ribitylamino)uracil with 3,4-dihydroxy-2-butanone 4-phosphate. This is the penultimate step in the biosynthesis of riboflavin. The sequence is that of 6,7-dimethyl-8-ribityllumazine synthase from Glaesserella parasuis serovar 5 (strain SH0165) (Haemophilus parasuis).